A 525-amino-acid chain; its full sequence is ATP synthase subunit alpha (525 aa).

171–178 (GDRQTGKS) is an ATP binding site.

Belongs to the ATPase alpha/beta chains family. As to quaternary structure, F-type ATPases have 2 components, CF(1) - the catalytic core - and CF(0) - the membrane proton channel. CF(1) has five subunits: alpha(3), beta(3), gamma(1), delta(1), epsilon(1). CF(0) has three main subunits: a(1), b(2) and c(9-12). The alpha and beta chains form an alternating ring which encloses part of the gamma chain. CF(1) is attached to CF(0) by a central stalk formed by the gamma and epsilon chains, while a peripheral stalk is formed by the delta and b chains.

Its subcellular location is the cell inner membrane. The catalysed reaction is ATP + H2O + 4 H(+)(in) = ADP + phosphate + 5 H(+)(out). In terms of biological role, produces ATP from ADP in the presence of a proton gradient across the membrane. The alpha chain is a regulatory subunit. This chain is ATP synthase subunit alpha, found in Flavobacterium johnsoniae (strain ATCC 17061 / DSM 2064 / JCM 8514 / BCRC 14874 / CCUG 350202 / NBRC 14942 / NCIMB 11054 / UW101) (Cytophaga johnsonae).